Reading from the N-terminus, the 254-residue chain is Trypsin (254 aa).

Residues 1–16 form the signal peptide; it reads MLRFIAVFALVNCALA. Residues 17 to 26 constitute a propeptide, activation peptide; it reads GTLPNDLDGR. In terms of domain architecture, Peptidase S1 spans 27-252; it reads IVNGVDTTIE…VRSWIEKTAK (226 aa). Cys-53 and Cys-69 are joined by a disulfide. Residues His-68 and Asp-113 each act as charge relay system in the active site. Intrachain disulfides connect Cys-154/Cys-158, Cys-178/Cys-195, and Cys-204/Cys-228. Residue Ser-208 is the Charge relay system of the active site.

It belongs to the peptidase S1 family.

It localises to the secreted. Its subcellular location is the extracellular space. The catalysed reaction is Preferential cleavage: Arg-|-Xaa, Lys-|-Xaa.. Its function is as follows. Involved in digestion of a protein meal. This chain is Trypsin, found in Sarcophaga bullata (Grey flesh fly).